Consider the following 411-residue polypeptide: MPKKFGRIHLVVMDSVGIGAAPDADKFFNHDVETHEAINDVKSDTIGHISEIRGLDVPNLQKLGWGNIPRESPLKTIPAAQKPAAYVTKLEEISKGKDTMTGHWEIMGLNIQTPFPTYPEGYPEDLLEKIEEFSGRKIIREANKPYSGTAVIEDFGPRQLETGELIIYTSADPVLQIAAHEDVISREELYKICEYVRSITLEGSGIMIGRIIARPYVGEAGNFERTDGRRDYALSPFAETVLEKLYKAGIDTYSVGKISDIFNTVGVKYDMGHNHNDMDGVDRLLKAMTKTEFTEGFSFTNLVDFDAKYGHRRDVEGYGKAIEDFDGRLPEIIDAMNEDDLLMITADHGNDPSYVGTDHTREYIPLVIFSKSFKEPKVLPVGHFADISATIAENFSVKKAQTGESFLDALV.

Mn(2+) contacts are provided by aspartate 14, aspartate 306, histidine 311, aspartate 347, histidine 348, and histidine 359.

This sequence belongs to the phosphopentomutase family. Mn(2+) serves as cofactor.

The protein resides in the cytoplasm. The catalysed reaction is 2-deoxy-alpha-D-ribose 1-phosphate = 2-deoxy-D-ribose 5-phosphate. The enzyme catalyses alpha-D-ribose 1-phosphate = D-ribose 5-phosphate. It participates in carbohydrate degradation; 2-deoxy-D-ribose 1-phosphate degradation; D-glyceraldehyde 3-phosphate and acetaldehyde from 2-deoxy-alpha-D-ribose 1-phosphate: step 1/2. Its function is as follows. Isomerase that catalyzes the conversion of deoxy-ribose 1-phosphate (dRib-1-P) and ribose 1-phosphate (Rib-1-P) to deoxy-ribose 5-phosphate (dRib-5-P) and ribose 5-phosphate (Rib-5-P), respectively. The polypeptide is Phosphopentomutase (Lactococcus lactis subsp. cremoris (strain SK11)).